The following is a 144-amino-acid chain: Cell division protein SepF (144 aa).

It belongs to the SepF family. As to quaternary structure, homodimer. Interacts with FtsZ.

It is found in the cytoplasm. In terms of biological role, cell division protein that is part of the divisome complex and is recruited early to the Z-ring. Probably stimulates Z-ring formation, perhaps through the cross-linking of FtsZ protofilaments. Its function overlaps with FtsA. This Oceanobacillus iheyensis (strain DSM 14371 / CIP 107618 / JCM 11309 / KCTC 3954 / HTE831) protein is Cell division protein SepF.